Consider the following 498-residue polypeptide: ATP synthase subunit beta, chloroplastic (498 aa).

172-179 (GGAGVGKT) is a binding site for ATP.

It belongs to the ATPase alpha/beta chains family. F-type ATPases have 2 components, CF(1) - the catalytic core - and CF(0) - the membrane proton channel. CF(1) has five subunits: alpha(3), beta(3), gamma(1), delta(1), epsilon(1). CF(0) has four main subunits: a(1), b(1), b'(1) and c(9-12).

It localises to the plastid. It is found in the chloroplast thylakoid membrane. It catalyses the reaction ATP + H2O + 4 H(+)(in) = ADP + phosphate + 5 H(+)(out). Functionally, produces ATP from ADP in the presence of a proton gradient across the membrane. The catalytic sites are hosted primarily by the beta subunits. This Populus trichocarpa (Western balsam poplar) protein is ATP synthase subunit beta, chloroplastic.